The chain runs to 152 residues: Acidic phospholipase A2 S16-19 (152 aa).

The N-terminal stretch at 1–19 (MYPAHLLVLLAVCVSLLGA) is a signal peptide. Residues 20 to 27 (SNIPLPSL) constitute a propeptide that is removed on maturation. 6 disulfides stabilise this stretch: Cys-38–Cys-104, Cys-54–Cys-151, Cys-71–Cys-132, Cys-78–Cys-125, Cys-88–Cys-118, and Cys-111–Cys-123. Ca(2+) contacts are provided by Tyr-55, Gly-57, and Gly-59. His-75 is an active-site residue. Asp-76 serves as a coordination point for Ca(2+). Asp-126 is an active-site residue.

This sequence belongs to the phospholipase A2 family. Group I subfamily. D49 sub-subfamily. Ca(2+) is required as a cofactor. Post-translationally, this enzyme lacks one of the seven disulfide bonds found in similar PLA2 proteins. Expressed by the venom gland.

It localises to the secreted. It catalyses the reaction a 1,2-diacyl-sn-glycero-3-phosphocholine + H2O = a 1-acyl-sn-glycero-3-phosphocholine + a fatty acid + H(+). Functionally, snake venom phospholipase A2 (PLA2) that inhibits collagen-induced platelet aggregation. PLA2 catalyzes the calcium-dependent hydrolysis of the 2-acyl groups in 3-sn-phosphoglycerides. The polypeptide is Acidic phospholipase A2 S16-19 (Austrelaps superbus (Lowland copperhead snake)).